Here is a 481-residue protein sequence, read N- to C-terminus: Glutamate--tRNA ligase (481 aa).

The 'HIGH' region motif lies at 11–21; the sequence is PSPTGLLHIGN. Positions 255-259 match the 'KMSKS' region motif; that stretch reads KLSKR. K258 contributes to the ATP binding site.

The protein belongs to the class-I aminoacyl-tRNA synthetase family. Glutamate--tRNA ligase type 1 subfamily. In terms of assembly, monomer.

The protein localises to the cytoplasm. It carries out the reaction tRNA(Glu) + L-glutamate + ATP = L-glutamyl-tRNA(Glu) + AMP + diphosphate. Functionally, catalyzes the attachment of glutamate to tRNA(Glu) in a two-step reaction: glutamate is first activated by ATP to form Glu-AMP and then transferred to the acceptor end of tRNA(Glu). The sequence is that of Glutamate--tRNA ligase from Streptococcus pyogenes serotype M6 (strain ATCC BAA-946 / MGAS10394).